Reading from the N-terminus, the 250-residue chain is Probable transcriptional regulatory protein Rxyl_1318 (250 aa).

Belongs to the TACO1 family.

It localises to the cytoplasm. The sequence is that of Probable transcriptional regulatory protein Rxyl_1318 from Rubrobacter xylanophilus (strain DSM 9941 / JCM 11954 / NBRC 16129 / PRD-1).